Reading from the N-terminus, the 360-residue chain is Phospho-N-acetylmuramoyl-pentapeptide-transferase (360 aa).

10 consecutive transmembrane segments (helical) span residues 26–46 (AVLS…KMIL), 73–93 (TMGG…WGDL), 94–114 (SNPY…IGFV), 132–152 (WKYF…YMIG), 168–188 (IMPQ…VGTS), 199–219 (GLAI…AWAT), 239–259 (LVIF…FNTY), 263–283 (VFMG…IAVL), 288–308 (FLLV…ILQV), and 338–358 (VIIR…VTLK).

The protein belongs to the glycosyltransferase 4 family. MraY subfamily. The cofactor is Mg(2+).

It is found in the cell inner membrane. It carries out the reaction UDP-N-acetyl-alpha-D-muramoyl-L-alanyl-gamma-D-glutamyl-meso-2,6-diaminopimeloyl-D-alanyl-D-alanine + di-trans,octa-cis-undecaprenyl phosphate = di-trans,octa-cis-undecaprenyl diphospho-N-acetyl-alpha-D-muramoyl-L-alanyl-D-glutamyl-meso-2,6-diaminopimeloyl-D-alanyl-D-alanine + UMP. It functions in the pathway cell wall biogenesis; peptidoglycan biosynthesis. Its function is as follows. Catalyzes the initial step of the lipid cycle reactions in the biosynthesis of the cell wall peptidoglycan: transfers peptidoglycan precursor phospho-MurNAc-pentapeptide from UDP-MurNAc-pentapeptide onto the lipid carrier undecaprenyl phosphate, yielding undecaprenyl-pyrophosphoryl-MurNAc-pentapeptide, known as lipid I. This chain is Phospho-N-acetylmuramoyl-pentapeptide-transferase, found in Actinobacillus succinogenes (strain ATCC 55618 / DSM 22257 / CCUG 43843 / 130Z).